The primary structure comprises 209 residues: Large ribosomal subunit protein uL3 (209 aa).

Glutamine 150 bears the N5-methylglutamine mark.

Belongs to the universal ribosomal protein uL3 family. Part of the 50S ribosomal subunit. Forms a cluster with proteins L14 and L19. In terms of processing, methylated by PrmB.

In terms of biological role, one of the primary rRNA binding proteins, it binds directly near the 3'-end of the 23S rRNA, where it nucleates assembly of the 50S subunit. This chain is Large ribosomal subunit protein uL3, found in Cronobacter sakazakii (strain ATCC BAA-894) (Enterobacter sakazakii).